We begin with the raw amino-acid sequence, 397 residues long: 1-deoxy-D-xylulose 5-phosphate reductoisomerase (397 aa).

NADPH is bound by residues threonine 17, glycine 18, serine 19, isoleucine 20, alanine 45, asparagine 47, and asparagine 130. Residue lysine 131 coordinates 1-deoxy-D-xylulose 5-phosphate. Glutamate 132 serves as a coordination point for NADPH. Aspartate 156 serves as a coordination point for Mn(2+). 4 residues coordinate 1-deoxy-D-xylulose 5-phosphate: serine 157, glutamate 158, serine 182, and histidine 205. Glutamate 158 lines the Mn(2+) pocket. Glycine 211 is an NADPH binding site. 1-deoxy-D-xylulose 5-phosphate is bound by residues serine 218, asparagine 223, lysine 224, and glutamate 227. Glutamate 227 is a binding site for Mn(2+).

This sequence belongs to the DXR family. Mg(2+) serves as cofactor. The cofactor is Mn(2+).

The enzyme catalyses 2-C-methyl-D-erythritol 4-phosphate + NADP(+) = 1-deoxy-D-xylulose 5-phosphate + NADPH + H(+). Its pathway is isoprenoid biosynthesis; isopentenyl diphosphate biosynthesis via DXP pathway; isopentenyl diphosphate from 1-deoxy-D-xylulose 5-phosphate: step 1/6. Functionally, catalyzes the NADPH-dependent rearrangement and reduction of 1-deoxy-D-xylulose-5-phosphate (DXP) to 2-C-methyl-D-erythritol 4-phosphate (MEP). The protein is 1-deoxy-D-xylulose 5-phosphate reductoisomerase of Agrobacterium fabrum (strain C58 / ATCC 33970) (Agrobacterium tumefaciens (strain C58)).